A 565-amino-acid polypeptide reads, in one-letter code: Bifunctional dihydrofolate reductase-thymidylate synthase 2 (565 aa).

The region spanning 65–242 is the DHFR domain; sequence TYQVVVAATK…LRFSFTTHVR (178 aa). Residue V69 coordinates substrate. Residues A71 and 77–83 contribute to the NADP(+) site; that span reads GIGKDGK. D91 contributes to the substrate binding site. NADP(+)-binding positions include 115-117 and 136-139; these read RKT and LSRS. I178 serves as a coordination point for substrate. Position 179–186 (179–186) interacts with NADP(+); sequence GGGDILRE. Residue T199 coordinates substrate. The hinge stretch occupies residues 245–280; it reads SSSAGEASDESDGSKVLQVDWKKFSSVLPKMIFDRH. The tract at residues 281–565 is thymidylate synthase; that stretch reads EEYLYLNLVK…HKKIDMKMAV (285 aa). A dUMP-binding site is contributed by R302. The active site involves C447. DUMP is bound by residues H448, 466 to 470, N478, and 508 to 510; these read QRSAD and HVY.

In the N-terminal section; belongs to the dihydrofolate reductase family. This sequence in the C-terminal section; belongs to the thymidylate synthase family. Heterodimer or homodimer.

It catalyses the reaction (6S)-5,6,7,8-tetrahydrofolate + NADP(+) = 7,8-dihydrofolate + NADPH + H(+). It carries out the reaction dUMP + (6R)-5,10-methylene-5,6,7,8-tetrahydrofolate = 7,8-dihydrofolate + dTMP. It functions in the pathway cofactor biosynthesis; tetrahydrofolate biosynthesis; 5,6,7,8-tetrahydrofolate from 7,8-dihydrofolate: step 1/1. Bifunctional enzyme. Involved in de novo dTMP biosynthesis. Key enzyme in folate metabolism. Can play two different roles depending on the source of dihydrofolate: de novo synthesis of tetrahydrofolate or recycling of the dihydrofolate released as one of the end products of the TS catalyzed reaction. Catalyzes an essential reaction for de novo glycine and purine synthesis, DNA precursor synthesis, and for the conversion of dUMP to dTMP. In Arabidopsis thaliana (Mouse-ear cress), this protein is Bifunctional dihydrofolate reductase-thymidylate synthase 2 (THY-2).